Reading from the N-terminus, the 190-residue chain is Large ribosomal subunit protein uL5 (190 aa).

The protein belongs to the universal ribosomal protein uL5 family. As to quaternary structure, part of the 50S ribosomal subunit; part of the 5S rRNA/L5/L18/L25 subcomplex. Contacts the 5S rRNA and the P site tRNA. Forms a bridge to the 30S subunit in the 70S ribosome.

Its function is as follows. This is one of the proteins that bind and probably mediate the attachment of the 5S RNA into the large ribosomal subunit, where it forms part of the central protuberance. In the 70S ribosome it contacts protein S13 of the 30S subunit (bridge B1b), connecting the 2 subunits; this bridge is implicated in subunit movement. Contacts the P site tRNA; the 5S rRNA and some of its associated proteins might help stabilize positioning of ribosome-bound tRNAs. This is Large ribosomal subunit protein uL5 from Bifidobacterium longum (strain DJO10A).